An 887-amino-acid chain; its full sequence is MSDEQDQGETKGRLSLRPVNRGELGRTVDAGSVRQSFSHGRSKVVQVEVRKKRGGAAGAETGRPSAPSRASGGAAAPRGLTAAEQAARQRAVVEQQREAARLEAERREQEKISILSAAEEARRKAEEEARAAEEAERLRAEEEARRREEEEAERRRAAEASQATAAPPAPAAAASPRAAMPAPTAAPARPGAAPARRTAPVPPATSASETLRLRAARTGRDEEEEASRPARRPGSGAAPSRKPSVPAPKKVGDDRRRGARIDVQAALSGDDERVRSLASVRRQRDRERRQAELERLRSDQVRVVREVVLPETITVQELANRMAARVPEVVKSLMKLGVMATATQTIDADTAELVVEEFGHRSKRVSESDVELGLEGQEDSETDLKVRPPVVTIMGHVDHGKTSLLDALRSTDVAAREAGGITQHIGAYQVTLESGAKMTFIDTPGHEAFTAMRARGASVTDIVILVVAADDGVMPQTVEAIRHAKAANVPIIVAINKIDRPDANPNRVRSELLQYDIAVEAMGGETQDVEVSALKRQGLDALQEAILLQAELLDLKANPNRSAEGAVIESSLDRGRGPVATVLVQKGTLRQGDIVVAGTEQGRVRAMLDDHGQPLKDAGPSTPVEILGLSGVPGAGEVFVVVENEGRAREIAEFRQRKLREHAAAAGAAARGTLDQMLARIQAGEQKEVALVIKADVQGSAEAIQATVQKLGNDEVRVRVLLAGVGQITESDVQLAKASDAIIVAFNVRANAQARTLASRDGVDIRYYSIIYQVSDDIETMVKGKLAPIEREKFLGYAEIRQVFNITKVGKVAGCYVTEGLVKRGAGVRLLREGVVIHQGELSQLKRFKDDVREVARGYECGLSFAGFSDLREGDVVECYETETVPA.

The interval 1–259 (MSDEQDQGET…KVGDDRRRGA (259 aa)) is disordered. The span at 62–94 (GRPSAPSRASGGAAAPRGLTAAEQAARQRAVVE) shows a compositional bias: low complexity. Basic and acidic residues-rich tracts occupy residues 95–111 (QQRE…EQEK) and 119–158 (EEAR…RRAA). Over residues 159 to 210 (EASQATAAPPAPAAAASPRAAMPAPTAAPARPGAAPARRTAPVPPATSASET) the composition is skewed to low complexity. Residues 250 to 259 (KVGDDRRRGA) show a composition bias toward basic and acidic residues. Positions 386–556 (VRPPVVTIMG…LLQAELLDLK (171 aa)) constitute a tr-type G domain. Residues 395 to 402 (GHVDHGKT) form a G1 region. 395 to 402 (GHVDHGKT) is a GTP binding site. The segment at 420-424 (GITQH) is G2. Residues 442-445 (DTPG) are G3. GTP contacts are provided by residues 442 to 446 (DTPGH) and 496 to 499 (NKID). The segment at 496–499 (NKID) is G4. Positions 532–534 (SAL) are G5.

The protein belongs to the TRAFAC class translation factor GTPase superfamily. Classic translation factor GTPase family. IF-2 subfamily.

It localises to the cytoplasm. In terms of biological role, one of the essential components for the initiation of protein synthesis. Protects formylmethionyl-tRNA from spontaneous hydrolysis and promotes its binding to the 30S ribosomal subunits. Also involved in the hydrolysis of GTP during the formation of the 70S ribosomal complex. The polypeptide is Translation initiation factor IF-2 (Acidiphilium cryptum (strain JF-5)).